A 230-amino-acid chain; its full sequence is Fibrillarin-like rRNA/tRNA 2'-O-methyltransferase (230 aa).

S-adenosyl-L-methionine contacts are provided by residues 87 to 88 (TT), 105 to 106 (EF), 130 to 131 (DA), and 150 to 153 (DVAQ).

It belongs to the methyltransferase superfamily. Fibrillarin family. As to quaternary structure, interacts with nop5. Component of box C/D small ribonucleoprotein (sRNP) particles that contain rpl7ae, FlpA and nop5, plus a guide RNA.

Involved in pre-rRNA and tRNA processing. Utilizes the methyl donor S-adenosyl-L-methionine to catalyze the site-specific 2'-hydroxyl methylation of ribose moieties in rRNA and tRNA. Site specificity is provided by a guide RNA that base pairs with the substrate. Methylation occurs at a characteristic distance from the sequence involved in base pairing with the guide RNA. This chain is Fibrillarin-like rRNA/tRNA 2'-O-methyltransferase, found in Methanococcus maripaludis (strain C6 / ATCC BAA-1332).